The following is a 301-amino-acid chain: Probable alpha-L-glutamate ligase 1 (301 aa).

Residues L104–E287 form the ATP-grasp domain. Residues K141, E178–Y179, D187, and R211–N213 contribute to the ATP site. Mg(2+) contacts are provided by D248, E260, and N262. Mn(2+) contacts are provided by D248, E260, and N262.

Belongs to the RimK family. It depends on Mg(2+) as a cofactor. Mn(2+) is required as a cofactor.

This chain is Probable alpha-L-glutamate ligase 1, found in Shewanella sp. (strain W3-18-1).